A 519-amino-acid polypeptide reads, in one-letter code: Cytochrome P450 4A22 (519 aa).

Residues 1–4 (MSVS) constitute a propeptide that is removed on maturation. Glu321 is a heme binding site. Position 440 is a phosphoserine (Ser440). Cys457 provides a ligand contact to heme.

It belongs to the cytochrome P450 family.

The protein localises to the endoplasmic reticulum membrane. It localises to the microsome membrane. It catalyses the reaction an omega-methyl-long-chain fatty acid + reduced [NADPH--hemoprotein reductase] + O2 = an omega-hydroxy-long-chain fatty acid + oxidized [NADPH--hemoprotein reductase] + H2O + H(+). Functionally, catalyzes the omega- and (omega-1)-hydroxylation of various fatty acids such as laurate and palmitate. Shows no activity towards arachidonic acid and prostaglandin A1. Lacks functional activity in the kidney and does not contribute to renal 20-hydroxyeicosatetraenoic acid (20-HETE) biosynthesis. This is Cytochrome P450 4A22 (CYP4A22) from Homo sapiens (Human).